A 156-amino-acid polypeptide reads, in one-letter code: Small ribosomal subunit protein uS7 (156 aa).

Belongs to the universal ribosomal protein uS7 family. As to quaternary structure, part of the 30S ribosomal subunit. Contacts proteins S9 and S11.

Its function is as follows. One of the primary rRNA binding proteins, it binds directly to 16S rRNA where it nucleates assembly of the head domain of the 30S subunit. Is located at the subunit interface close to the decoding center, probably blocks exit of the E-site tRNA. The chain is Small ribosomal subunit protein uS7 from Mycobacteroides abscessus (strain ATCC 19977 / DSM 44196 / CCUG 20993 / CIP 104536 / JCM 13569 / NCTC 13031 / TMC 1543 / L948) (Mycobacterium abscessus).